Here is a 356-residue protein sequence, read N- to C-terminus: UDP-N-acetylglucosamine--N-acetylmuramyl-(pentapeptide) pyrophosphoryl-undecaprenol N-acetylglucosamine transferase (356 aa).

UDP-N-acetyl-alpha-D-glucosamine is bound by residues Ser-195 and Gln-287.

The protein belongs to the glycosyltransferase 28 family. MurG subfamily.

The protein resides in the cell membrane. It catalyses the reaction Mur2Ac(oyl-L-Ala-gamma-D-Glu-L-Lys-D-Ala-D-Ala)-di-trans,octa-cis-undecaprenyl diphosphate + UDP-N-acetyl-alpha-D-glucosamine = beta-D-GlcNAc-(1-&gt;4)-Mur2Ac(oyl-L-Ala-gamma-D-Glu-L-Lys-D-Ala-D-Ala)-di-trans,octa-cis-undecaprenyl diphosphate + UDP + H(+). It participates in cell wall biogenesis; peptidoglycan biosynthesis. In terms of biological role, cell wall formation. Catalyzes the transfer of a GlcNAc subunit on undecaprenyl-pyrophosphoryl-MurNAc-pentapeptide (lipid intermediate I) to form undecaprenyl-pyrophosphoryl-MurNAc-(pentapeptide)GlcNAc (lipid intermediate II). The protein is UDP-N-acetylglucosamine--N-acetylmuramyl-(pentapeptide) pyrophosphoryl-undecaprenol N-acetylglucosamine transferase of Streptococcus sanguinis (strain SK36).